Consider the following 386-residue polypeptide: Lipoyl synthase, mitochondrial (386 aa).

Residues 1–48 are disordered; the sequence is MHGRRHLAASLTRALTQAPSRSISSTPSLLQTLDPSVPSPSPPPAAEP. Over residues 13–34 the composition is skewed to polar residues; that stretch reads RALTQAPSRSISSTPSLLQTLD. The span at 37–46 shows a compositional bias: pro residues; it reads VPSPSPPPAA. Positions 113, 118, 124, 144, 148, 151, and 360 each coordinate [4Fe-4S] cluster. A Radical SAM core domain is found at 129–349; sequence ETGTATATIM…RALGVEMGFR (221 aa).

It belongs to the radical SAM superfamily. Lipoyl synthase family. The cofactor is [4Fe-4S] cluster.

Its subcellular location is the mitochondrion. It catalyses the reaction [[Fe-S] cluster scaffold protein carrying a second [4Fe-4S](2+) cluster] + N(6)-octanoyl-L-lysyl-[protein] + 2 oxidized [2Fe-2S]-[ferredoxin] + 2 S-adenosyl-L-methionine + 4 H(+) = [[Fe-S] cluster scaffold protein] + N(6)-[(R)-dihydrolipoyl]-L-lysyl-[protein] + 4 Fe(3+) + 2 hydrogen sulfide + 2 5'-deoxyadenosine + 2 L-methionine + 2 reduced [2Fe-2S]-[ferredoxin]. The protein operates within protein modification; protein lipoylation via endogenous pathway; protein N(6)-(lipoyl)lysine from octanoyl-[acyl-carrier-protein]: step 2/2. In terms of biological role, catalyzes the radical-mediated insertion of two sulfur atoms into the C-6 and C-8 positions of the octanoyl moiety bound to the lipoyl domains of lipoate-dependent enzymes, thereby converting the octanoylated domains into lipoylated derivatives. The protein is Lipoyl synthase, mitochondrial of Sorghum bicolor (Sorghum).